A 216-amino-acid chain; its full sequence is Minor fimbrial subunit HifD (216 aa).

The signal sequence occupies residues 1 to 19 (MQKTPKKLTALCHQQSTAS). The N-palmitoyl cysteine moiety is linked to residue Cys20. Cys20 carries S-diacylglycerol cysteine lipidation. A disordered region spans residues 159-180 (PINVDGSQANSEKAPDTGKEQN).

The protein belongs to the fimbrial protein family.

The protein localises to the cell membrane. Its subcellular location is the fimbrium. Functionally, may be a minor structural protein required for pilus biogenesis. In Haemophilus influenzae, this protein is Minor fimbrial subunit HifD (hifD).